The following is a 425-amino-acid chain: Serine--tRNA ligase (425 aa).

Threonine 229–glutamate 231 is a binding site for L-serine. Residues arginine 259–glutamate 261 and valine 275 each bind ATP. Glutamate 282 is an L-serine binding site. Glutamate 349–serine 352 is a binding site for ATP. Threonine 384 contributes to the L-serine binding site.

The protein belongs to the class-II aminoacyl-tRNA synthetase family. Type-1 seryl-tRNA synthetase subfamily. Homodimer. The tRNA molecule binds across the dimer.

It is found in the cytoplasm. It carries out the reaction tRNA(Ser) + L-serine + ATP = L-seryl-tRNA(Ser) + AMP + diphosphate + H(+). The catalysed reaction is tRNA(Sec) + L-serine + ATP = L-seryl-tRNA(Sec) + AMP + diphosphate + H(+). The protein operates within aminoacyl-tRNA biosynthesis; selenocysteinyl-tRNA(Sec) biosynthesis; L-seryl-tRNA(Sec) from L-serine and tRNA(Sec): step 1/1. In terms of biological role, catalyzes the attachment of serine to tRNA(Ser). Is also able to aminoacylate tRNA(Sec) with serine, to form the misacylated tRNA L-seryl-tRNA(Sec), which will be further converted into selenocysteinyl-tRNA(Sec). The chain is Serine--tRNA ligase from Borreliella burgdorferi (strain ATCC 35210 / DSM 4680 / CIP 102532 / B31) (Borrelia burgdorferi).